The following is a 198-amino-acid chain: Dual specificity protein phosphatase 14 (198 aa).

One can recognise a Tyrosine-protein phosphatase domain in the interval 26–167 (GIAQITSSLF…LIDYERQLFG (142 aa)). The active-site Phosphocysteine intermediate is cysteine 111.

It belongs to the protein-tyrosine phosphatase family. Non-receptor class dual specificity subfamily. Interacts with CD28.

It carries out the reaction O-phospho-L-tyrosyl-[protein] + H2O = L-tyrosyl-[protein] + phosphate. The catalysed reaction is O-phospho-L-seryl-[protein] + H2O = L-seryl-[protein] + phosphate. The enzyme catalyses O-phospho-L-threonyl-[protein] + H2O = L-threonyl-[protein] + phosphate. In terms of biological role, involved in the inactivation of MAP kinases. Dephosphorylates ERK, JNK and p38 MAP-kinases. Plays a negative role in TCR signaling by dephosphorylating MAP3K7 adapter TAB1 leading to its inactivation. In Bos taurus (Bovine), this protein is Dual specificity protein phosphatase 14 (DUSP14).